The primary structure comprises 495 residues: MARRAAAVLLLLALGCLLGILLLCLGSGDARGPPSFKYGIVLDAGSSHTAVFIYKWPADKENDTGVVSEHSMCDVEGPGISSYSSKPPAAGKSLEHCLSQAMRDVPKEKHADTPLYLGATAGMRLLTIADPPSQTCLSAVMATLKSYPFDFGGAKILSGEEEGVFGWITANYLLENFIKRGWLGEWIQSKKKTLGAMDFGGASTQITFETSDAIEDPKNEVMLKLYGQPYKVYTHSFLCYGRDQVLKRLLSKVLQAENYQETVANPCWPTGYRKSLSLSSIYDSPCTEKERPGLPLNTTVVVSGTGNGNLCAVHVNKLFDFTSCSFSHCSFDGVFQPEVSGNFIAFSAFFYTVDFIRTVMERPVHSPSDLKDAAETICATSWNELYQKAPRLEKRLPDYCATSTFVYLLITKGYNFNNRSFPSIAFQKKAGETSIGWALGYMLNLTNMIPAQEPASHRSMLYNYWVILILLFVITTLTALLTAVYLLRRSKSSTI.

Residues 2-4 (ARR) are Cytoplasmic-facing. A helical membrane pass occupies residues 5–25 (AAAVLLLLALGCLLGILLLCL). Over 26 to 465 (GSGDARGPPS…SHRSMLYNYW (440 aa)) the chain is Extracellular. A glycan (N-linked (GlcNAc...) asparagine) is linked at Asn62. A disulfide bond links Cys73 and Cys97. The active-site Proton acceptor is Glu162. An ATP-binding site is contributed by 201–205 (GASTQ). 4 disulfide bridges follow: Cys239–Cys286, Cys267–Cys311, Cys324–Cys329, and Cys378–Cys400. Asn297 carries N-linked (GlcNAc...) asparagine glycosylation. Asn418 and Asn444 each carry an N-linked (GlcNAc...) asparagine glycan. Residues 466–486 (VILILLFVITTLTALLTAVYL) traverse the membrane as a helical segment. Over 487 to 495 (LRRSKSSTI) the chain is Cytoplasmic.

It belongs to the GDA1/CD39 NTPase family. It depends on Ca(2+) as a cofactor. Mg(2+) serves as cofactor.

It localises to the membrane. Its function is as follows. In the nervous system, could hydrolyze ATP and other nucleotides to regulate purinergic neurotransmission. Hydrolyzes ADP only to a marginal extent. The polypeptide is Ectonucleoside triphosphate diphosphohydrolase 2 (ENTPD2) (Gallus gallus (Chicken)).